Consider the following 324-residue polypeptide: Aspartate carbamoyltransferase catalytic subunit (324 aa).

2 residues coordinate carbamoyl phosphate: R65 and T66. An L-aspartate-binding site is contributed by K93. Carbamoyl phosphate contacts are provided by R115, H145, and Q148. R178 and R233 together coordinate L-aspartate. Carbamoyl phosphate is bound by residues G274 and P275.

Belongs to the aspartate/ornithine carbamoyltransferase superfamily. ATCase family. In terms of assembly, heterododecamer (2C3:3R2) of six catalytic PyrB chains organized as two trimers (C3), and six regulatory PyrI chains organized as three dimers (R2).

It carries out the reaction carbamoyl phosphate + L-aspartate = N-carbamoyl-L-aspartate + phosphate + H(+). Its pathway is pyrimidine metabolism; UMP biosynthesis via de novo pathway; (S)-dihydroorotate from bicarbonate: step 2/3. Its function is as follows. Catalyzes the condensation of carbamoyl phosphate and aspartate to form carbamoyl aspartate and inorganic phosphate, the committed step in the de novo pyrimidine nucleotide biosynthesis pathway. In Nitrosococcus oceani (strain ATCC 19707 / BCRC 17464 / JCM 30415 / NCIMB 11848 / C-107), this protein is Aspartate carbamoyltransferase catalytic subunit.